A 297-amino-acid chain; its full sequence is Phosphoribosylaminoimidazole-succinocarboxamide synthase (297 aa).

The protein belongs to the SAICAR synthetase family.

The catalysed reaction is 5-amino-1-(5-phospho-D-ribosyl)imidazole-4-carboxylate + L-aspartate + ATP = (2S)-2-[5-amino-1-(5-phospho-beta-D-ribosyl)imidazole-4-carboxamido]succinate + ADP + phosphate + 2 H(+). Its pathway is purine metabolism; IMP biosynthesis via de novo pathway; 5-amino-1-(5-phospho-D-ribosyl)imidazole-4-carboxamide from 5-amino-1-(5-phospho-D-ribosyl)imidazole-4-carboxylate: step 1/2. The chain is Phosphoribosylaminoimidazole-succinocarboxamide synthase from Corynebacterium glutamicum (strain ATCC 13032 / DSM 20300 / JCM 1318 / BCRC 11384 / CCUG 27702 / LMG 3730 / NBRC 12168 / NCIMB 10025 / NRRL B-2784 / 534).